A 221-amino-acid chain; its full sequence is Ribosomal RNA small subunit methyltransferase G (221 aa).

S-adenosyl-L-methionine contacts are provided by residues G85, F90, 136-137 (AE), and R149.

This sequence belongs to the methyltransferase superfamily. RNA methyltransferase RsmG family.

The protein localises to the cytoplasm. Specifically methylates the N7 position of a guanine in 16S rRNA. This chain is Ribosomal RNA small subunit methyltransferase G, found in Porphyromonas gingivalis (strain ATCC BAA-308 / W83).